A 508-amino-acid polypeptide reads, in one-letter code: MGLPWYRVHTVVLNDPGRLIAVHLMHTSLVSGWAGSMAFYELALFDPSDPILNPMWRQGMFVLPFMTRIGITQSWSNWSISGDSVVNPGIWSYEGVAASHIILSGLLFMAAIWHWVYWDLELFIDKRTMFPVLDLPKIFGIHLLLSGILCFGFGAFHVTGLFGPGIWVSDPYGLTGKVQQISPAWGADGFDPFNPGGVASHHIAAGILGIIAGLFHLSVRPSQRLYDALKMGNIETVLSSSIAAVFWAAFVVAGTMWYGSAATPIELFGPTRYQWDQGYFQQEIERRVQANIDNGNSIDKAWSLIPEKLAFYDYIGNNPAKGGLFRVGAMNSGDGIAVGWLGHPIFKDKLGNELFVRRMPTFFETFPVLLVDENGIVKADIPFRRAESKYSIEQVGVSATFYGGELNNATFTDPATVKKYARRAQLGEIFEFDRTTLKSDGVFRSSPRAWFTFGHLIFALLFFFGHIWHGARTLFRQVFAGIDPDLDEQIEFGTFLKLGDTSTRRQSV.

Transmembrane regions (helical) follow at residues 21–36, 101–115, 140–156, 203–218, 237–252, and 457–472; these read AVHL…WAGS, IILS…IWHW, GIHL…FGAF, IAAG…FHLS, VLSS…AFVV, and IFAL…HGAR.

Belongs to the PsbB/PsbC family. PsbB subfamily. As to quaternary structure, PSII is composed of 1 copy each of membrane proteins PsbA, PsbB, PsbC, PsbD, PsbE, PsbF, PsbH, PsbI, PsbJ, PsbK, PsbL, PsbM, PsbT, PsbY, PsbZ, Psb30/Ycf12, at least 3 peripheral proteins of the oxygen-evolving complex and a large number of cofactors. It forms dimeric complexes. Binds multiple chlorophylls. PSII binds additional chlorophylls, carotenoids and specific lipids. is required as a cofactor.

It localises to the plastid. It is found in the chloroplast thylakoid membrane. In terms of biological role, one of the components of the core complex of photosystem II (PSII). It binds chlorophyll and helps catalyze the primary light-induced photochemical processes of PSII. PSII is a light-driven water:plastoquinone oxidoreductase, using light energy to abstract electrons from H(2)O, generating O(2) and a proton gradient subsequently used for ATP formation. The polypeptide is Photosystem II CP47 reaction center protein (Bigelowiella natans (Pedinomonas minutissima)).